We begin with the raw amino-acid sequence, 397 residues long: Decapping and exoribonuclease protein (397 aa).

Substrate contacts are provided by residues R58, E101, and 131–133 (WRG). A Mg(2+)-binding site is contributed by E192. Residues C217 and E234 each contribute to the substrate site. Mg(2+) contacts are provided by E234, D236, E253, and L254. Residues K255 and Q280 each coordinate substrate. Phosphothreonine is present on T392. S394 carries the phosphoserine modification.

This sequence belongs to the DXO/Dom3Z family. The cofactor is Mg(2+).

Its subcellular location is the nucleus. It catalyses the reaction a 5'-end triphospho-ribonucleoside in mRNA + H2O = a 5'-end phospho-ribonucleoside in mRNA + diphosphate + H(+). The enzyme catalyses a 5'-end NAD(+)-phospho-ribonucleoside in mRNA + H2O = a 5'-end phospho-ribonucleoside in mRNA + NAD(+) + H(+). The catalysed reaction is a 5'-end NAD(+)-phospho-ribonucleoside in snoRNA + H2O = a 5'-end phospho-ribonucleoside in snoRNA + NAD(+) + H(+). It carries out the reaction a 5'-end (N(7)-methyl 5'-triphosphoguanosine)-ribonucleoside-ribonucleotide in mRNA + H2O = a (N(7)-methyl 5'-triphosphoguanosine)-nucleoside + a 5'-end phospho-ribonucleoside in mRNA + H(+). It catalyses the reaction a 5'-end FAD-phospho-ribonucleoside in mRNA + H2O = a 5'-end phospho-ribonucleoside in mRNA + FAD + H(+). The enzyme catalyses a 5'-end CoA-ribonucleoside in mRNA + H2O = 3'-dephospho-CoA + a 5'-end phospho-ribonucleoside in mRNA + H(+). Functionally, decapping enzyme for NAD-capped RNAs: specifically hydrolyzes the nicotinamide adenine dinucleotide (NAD) cap from a subset of RNAs by removing the entire NAD moiety from the 5'-end of an NAD-capped RNA. The NAD-cap is present at the 5'-end of some RNAs and snoRNAs. In contrast to the canonical 5'-end N7 methylguanosine (m7G) cap, the NAD cap promotes mRNA decay. Preferentially acts on NAD-capped transcripts in response to environmental stress. Also acts as a non-canonical decapping enzyme that removes the entire cap structure of m7G capped or incompletely capped RNAs and mediates their subsequent degradation. Specifically degrades pre-mRNAs with a defective 5'-end m7G cap and is part of a pre-mRNA capping quality control. Has decapping activity toward incomplete 5'-end m7G cap mRNAs such as unmethylated 5'-end-capped RNA (cap0), while it has no activity toward 2'-O-ribose methylated m7G cap (cap1). In contrast to canonical decapping enzymes DCP2 and NUDT16, which cleave the cap within the triphosphate linkage, the decapping activity releases the entire cap structure GpppN and a 5'-end monophosphate RNA. Also has 5'-3' exoribonuclease activities: The 5'-end monophosphate RNA is then degraded by the 5'-3' exoribonuclease activity, enabling this enzyme to decap and degrade incompletely capped mRNAs. Also possesses RNA 5'-pyrophosphohydrolase activity by hydrolyzing the 5'-end triphosphate to release pyrophosphates. Exhibits decapping activity towards FAD-capped RNAs. Exhibits decapping activity towards dpCoA-capped RNAs in vitro. This chain is Decapping and exoribonuclease protein, found in Rattus norvegicus (Rat).